The sequence spans 248 residues: Glutamine-binding periplasmic protein (248 aa).

A signal peptide spans M1 to A22.

This sequence belongs to the bacterial solute-binding protein 3 family.

The protein localises to the periplasm. Functionally, involved in a glutamine-transport system GlnHPQ. The sequence is that of Glutamine-binding periplasmic protein (glnH) from Escherichia coli O157:H7.